We begin with the raw amino-acid sequence, 97 residues long: MARVTVEDCLEHVENRFDLVLKAAKRAHILELGGAEPMVPRDNDKPAVLALREIAAGYDVTREGQEQETEEVDVGRNVLAETAKMNKAVASQKESEV.

The protein belongs to the RNA polymerase subunit omega family. The RNAP catalytic core consists of 2 alpha, 1 beta, 1 beta' and 1 omega subunit. When a sigma factor is associated with the core the holoenzyme is formed, which can initiate transcription.

It carries out the reaction RNA(n) + a ribonucleoside 5'-triphosphate = RNA(n+1) + diphosphate. In terms of biological role, promotes RNA polymerase assembly. Latches the N- and C-terminal regions of the beta' subunit thereby facilitating its interaction with the beta and alpha subunits. This is DNA-directed RNA polymerase subunit omega from Coxiella burnetii (strain Dugway 5J108-111).